We begin with the raw amino-acid sequence, 30 residues long: Photosystem I reaction center subunit XII (30 aa).

Residues 5–25 form a helical membrane-spanning segment; that stretch reads SQIFFALCIALTAAVLAIGLG.

Belongs to the PsaM family.

It localises to the plastid. The protein localises to the chloroplast thylakoid membrane. This chain is Photosystem I reaction center subunit XII, found in Emiliania huxleyi (Coccolithophore).